A 351-amino-acid chain; its full sequence is L-threonine 3-dehydrogenase (351 aa).

Zn(2+) is bound at residue C39. Residues T41 and H44 each act as charge relay system in the active site. Residues H64, E65, C94, C97, C100, and C108 each contribute to the Zn(2+) site. NAD(+) contacts are provided by residues I176, D196, R201, 271-273, and 295-296; these read LGI and IY.

The protein belongs to the zinc-containing alcohol dehydrogenase family. In terms of assembly, homotetramer. Zn(2+) serves as cofactor.

It is found in the cytoplasm. It catalyses the reaction L-threonine + NAD(+) = (2S)-2-amino-3-oxobutanoate + NADH + H(+). Its pathway is amino-acid degradation; L-threonine degradation via oxydo-reductase pathway; glycine from L-threonine: step 1/2. Functionally, catalyzes the NAD(+)-dependent oxidation of L-threonine to 2-amino-3-ketobutyrate. The polypeptide is L-threonine 3-dehydrogenase (Francisella tularensis subsp. holarctica (strain OSU18)).